A 151-amino-acid chain; its full sequence is 3-hydroxyacyl-[acyl-carrier-protein] dehydratase FabZ (151 aa).

Residue histidine 54 is part of the active site.

It belongs to the thioester dehydratase family. FabZ subfamily. As to quaternary structure, oligomer. In terms of processing, the N-terminus is blocked.

Its subcellular location is the cytoplasm. The catalysed reaction is a (3R)-hydroxyacyl-[ACP] = a (2E)-enoyl-[ACP] + H2O. Its function is as follows. Involved in unsaturated fatty acids biosynthesis. Catalyzes the dehydration of short chain beta-hydroxyacyl-ACPs and long chain saturated and unsaturated beta-hydroxyacyl-ACPs. This is 3-hydroxyacyl-[acyl-carrier-protein] dehydratase FabZ from Escherichia coli O9:H4 (strain HS).